The following is an 879-amino-acid chain: Valine--tRNA ligase (879 aa).

Residues 45 to 55 (PNVTGKLHLGH) carry the 'HIGH' region motif. The 'KMSKS' region motif lies at 521–525 (KMSKS). Lysine 524 is an ATP binding site. Residues 806–879 (LTELVNVDEE…ERIQDLKESK (74 aa)) are a coiled coil.

This sequence belongs to the class-I aminoacyl-tRNA synthetase family. ValS type 1 subfamily. In terms of assembly, monomer.

The protein localises to the cytoplasm. It carries out the reaction tRNA(Val) + L-valine + ATP = L-valyl-tRNA(Val) + AMP + diphosphate. Catalyzes the attachment of valine to tRNA(Val). As ValRS can inadvertently accommodate and process structurally similar amino acids such as threonine, to avoid such errors, it has a 'posttransfer' editing activity that hydrolyzes mischarged Thr-tRNA(Val) in a tRNA-dependent manner. The chain is Valine--tRNA ligase from Lactobacillus acidophilus (strain ATCC 700396 / NCK56 / N2 / NCFM).